The primary structure comprises 202 residues: Small ribosomal subunit protein uS5 (202 aa).

An S5 DRBM domain is found at 50 to 113; sequence LKQELLNLNL…REAKLNITPV (64 aa).

Belongs to the universal ribosomal protein uS5 family. In terms of assembly, part of the 30S ribosomal subunit. Contacts protein S4.

With S4 and S12 plays an important role in translational accuracy. The protein is Small ribosomal subunit protein uS5 of Pyrobaculum calidifontis (strain DSM 21063 / JCM 11548 / VA1).